The primary structure comprises 429 residues: MTAIVSIHGRQVVDSRGNPTVEVDVTLEDGSFGRAAVPSGASTGVHEAVELRDGDKTRWGGKGVTKAVHAVNNEIANAIIGLEAEDQELIDQTMIKLDGTPNKGKFGANAILGVSLAVAKAAAEARGLPLYRYVGGTAAHVLPVPMMNIVNGGMHADNPIDFQEFMIAPVGASSINEAVRIGTEVFHTLKKELSAKGMNTNVGDEGGFAPSLDSASSALDFIVDSISKAGYKPGEDVFIALDAASSEFYNKDQNIYDLKGEGRKLTSAQLVDYYVELCGKYPIYSIEDGLAEDDFEGWKILTEKLGDKVQLVGDDLFVTNVKRLSDGIERGIANSLLVKFNQIGSLSETLAAVNMANDASYTAVMSHRSGETEDTTIADLAVATNCGQIKTGSLCRSERIAKYNQLMRIEEELGSVAKYAGRSVLRKAK.

Gln-163 contributes to the (2R)-2-phosphoglycerate binding site. Catalysis depends on Glu-205, which acts as the Proton donor. Residues Asp-242, Glu-287, and Asp-314 each coordinate Mg(2+). Lys-339, Arg-368, Ser-369, and Lys-390 together coordinate (2R)-2-phosphoglycerate. The Proton acceptor role is filled by Lys-339.

It belongs to the enolase family. In terms of assembly, homooctamer. Mg(2+) serves as cofactor.

The protein resides in the cytoplasm. Its subcellular location is the secreted. It is found in the cell surface. It carries out the reaction (2R)-2-phosphoglycerate = phosphoenolpyruvate + H2O. Its pathway is carbohydrate degradation; glycolysis; pyruvate from D-glyceraldehyde 3-phosphate: step 4/5. Its function is as follows. Catalyzes the reversible conversion of 2-phosphoglycerate (2-PG) into phosphoenolpyruvate (PEP). It is essential for the degradation of carbohydrates via glycolysis. This Zymomonas mobilis subsp. mobilis (strain ATCC 31821 / ZM4 / CP4) protein is Enolase.